The primary structure comprises 177 residues: Probable prophage lysozyme (177 aa).

Residue Glu35 is the Proton donor of the active site. Asp44 (nucleophile) is an active-site residue.

It belongs to the glycosyl hydrolase 24 family.

It catalyses the reaction Hydrolysis of (1-&gt;4)-beta-linkages between N-acetylmuramic acid and N-acetyl-D-glucosamine residues in a peptidoglycan and between N-acetyl-D-glucosamine residues in chitodextrins.. Functionally, essential for lysis of bacterial cell wall, by showing cell wall hydrolyzing activity. In Escherichia coli (strain K12), this protein is Probable prophage lysozyme (rrrQ).